We begin with the raw amino-acid sequence, 156 residues long: Ribosomal RNA large subunit methyltransferase H (156 aa).

Residues Leu73, Gly104, and 123–128 (LSPLTL) each bind S-adenosyl-L-methionine.

Belongs to the RNA methyltransferase RlmH family. In terms of assembly, homodimer.

The protein resides in the cytoplasm. The enzyme catalyses pseudouridine(1915) in 23S rRNA + S-adenosyl-L-methionine = N(3)-methylpseudouridine(1915) in 23S rRNA + S-adenosyl-L-homocysteine + H(+). In terms of biological role, specifically methylates the pseudouridine at position 1915 (m3Psi1915) in 23S rRNA. The sequence is that of Ribosomal RNA large subunit methyltransferase H from Photorhabdus laumondii subsp. laumondii (strain DSM 15139 / CIP 105565 / TT01) (Photorhabdus luminescens subsp. laumondii).